Consider the following 188-residue polypeptide: Ribosome-recycling factor (188 aa).

Belongs to the RRF family.

The protein localises to the cytoplasm. Responsible for the release of ribosomes from messenger RNA at the termination of protein biosynthesis. May increase the efficiency of translation by recycling ribosomes from one round of translation to another. This is Ribosome-recycling factor from Blochmanniella floridana.